The primary structure comprises 147 residues: Large ribosomal subunit protein uL15 (147 aa).

Positions 1–28 are enriched in basic residues; sequence MIRRRKKVRKLRGSHTHGWGCKKKHRGG. Positions 1-43 are disordered; sequence MIRRRKKVRKLRGSHTHGWGCKKKHRGGGSKGGRGMAGTGKRN. A compositionally biased stretch (gly residues) spans 29 to 38; the sequence is GSKGGRGMAG.

Belongs to the universal ribosomal protein uL15 family. Part of the 50S ribosomal subunit.

Binds to the 23S rRNA. The polypeptide is Large ribosomal subunit protein uL15 (Pyrococcus horikoshii (strain ATCC 700860 / DSM 12428 / JCM 9974 / NBRC 100139 / OT-3)).